Reading from the N-terminus, the 316-residue chain is Succinoglycan biosynthesis protein ExoV (316 aa).

Its pathway is glycan metabolism; exopolysaccharide biosynthesis. The polypeptide is Succinoglycan biosynthesis protein ExoV (exoV) (Rhizobium meliloti (strain 1021) (Ensifer meliloti)).